The sequence spans 278 residues: DNA repair protein RecO (278 aa).

Positions 1–12 (MGTNDALTSTED) are enriched in polar residues. Residues 1–41 (MGTNDALTSTEDAVTAGANDAPLPAPPEPPRKARRATSRTS) form a disordered region.

It belongs to the RecO family.

Involved in DNA repair and RecF pathway recombination. This is DNA repair protein RecO from Burkholderia orbicola (strain AU 1054).